A 250-amino-acid polypeptide reads, in one-letter code: Cruxrhodopsin-3 (250 aa).

Residues 1-9 are Extracellular-facing; it reads MPAPEGEAI. The helical transmembrane segment at 10 to 27 threads the bilayer; sequence WLWLGTAGMFLGMLYFIA. The Cytoplasmic segment spans residues 28 to 41; sequence RGWGETDSRRQKFY. The helical transmembrane segment at 42–60 threads the bilayer; it reads IATILITAIAFVNYLAMAL. The Extracellular segment spans residues 61–77; it reads GFGLTIVEIAGEQRPIY. Residues 78–94 form a helical membrane-spanning segment; sequence WARYSDWLFTTPLLLYD. Residues 95 to 105 lie on the Cytoplasmic side of the membrane; it reads LGLLAGADRNT. A helical membrane pass occupies residues 106 to 125; the sequence is ISSLVSLDVLMIGTGLVATL. Residues 126–138 are Extracellular-facing; it reads SAGSGVLSAGAER. The chain crosses the membrane as a helical span at residues 139-158; that stretch reads LVWWGISTAFLLVLLYFLFS. Over 159–176 the chain is Cytoplasmic; that stretch reads SLSGRVADLPSDTRSTFK. Residues 177 to 195 traverse the membrane as a helical segment; that stretch reads TLRNLVTVVWLVYPVWWLV. Topologically, residues 196 to 207 are extracellular; that stretch reads GTEGIGLVGIGI. Residues 208–227 form a helical membrane-spanning segment; it reads ETAGFMVIDLVAKVGFGIIL. Lysine 220 is modified (N6-(retinylidene)lysine). Topologically, residues 228 to 250 are cytoplasmic; the sequence is LRSHGVLDGAAETTGAGATATAD.

It belongs to the archaeal/bacterial/fungal opsin family. Homotrimer. Binds bacterioruberin in the crevice between neighboring subunits.

It is found in the cell membrane. Functionally, light-driven proton pump. This chain is Cruxrhodopsin-3 (cop3), found in Haloarcula vallismortis (Halobacterium vallismortis).